The chain runs to 317 residues: Putative 12-oxophytodienoate reductase 10 (317 aa).

26–28 contacts FMN; that stretch reads PVG. Residue 117 to 120 participates in substrate binding; that stretch reads HGAN. Residue Tyr-122 is the Proton donor of the active site. FMN is bound at residue Arg-169. Arg-209 serves as a coordination point for substrate. FMN-binding positions include Gly-244 and 265–266; that span reads GR.

It belongs to the NADH:flavin oxidoreductase/NADH oxidase family. FMN serves as cofactor.

In terms of biological role, putative oxophytodienoate reductase that may be involved in the biosynthesis or metabolism of oxylipin signaling molecules. This Oryza sativa subsp. japonica (Rice) protein is Putative 12-oxophytodienoate reductase 10 (OPR10).